Reading from the N-terminus, the 550-residue chain is Membrane protein insertase YidC (550 aa).

Residues 3-23 traverse the membrane as a helical segment; it reads IKRTVLWVIFFMSAVMLFDNW. A disordered region spans residues 34–73; it reads FPSATQTKTAAPAAPGSSTTASQPTDLPQTTAAAPGSTTP. The span at 35 to 73 shows a compositional bias: low complexity; it reads PSATQTKTAAPAAPGSSTTASQPTDLPQTTAAAPGSTTP. A run of 4 helical transmembrane segments spans residues 363 to 383, 429 to 449, 472 to 492, and 503 to 523; these read WGWA…PLSA, FGGC…YWVL, PYFI…KLNP, and MMFM…GLVL.

Belongs to the OXA1/ALB3/YidC family. Type 1 subfamily. As to quaternary structure, interacts with the Sec translocase complex via SecD. Specifically interacts with transmembrane segments of nascent integral membrane proteins during membrane integration.

It is found in the cell inner membrane. In terms of biological role, required for the insertion and/or proper folding and/or complex formation of integral membrane proteins into the membrane. Involved in integration of membrane proteins that insert both dependently and independently of the Sec translocase complex, as well as at least some lipoproteins. Aids folding of multispanning membrane proteins. The polypeptide is Membrane protein insertase YidC (Paraburkholderia phymatum (strain DSM 17167 / CIP 108236 / LMG 21445 / STM815) (Burkholderia phymatum)).